Here is a 23-residue protein sequence, read N- to C-terminus: Conolysin-Mt1 (23 aa).

At Ser-22 the chain carries Serine amide.

In terms of tissue distribution, expressed by the venom duct.

It is found in the secreted. Its function is as follows. This cytolytic peptide has ability to disrupt the integrity of cell membranes from both prokaryotes and eukaryotes. It permeabilizes both negatively charged prokaryotic (PE:PG) and zwitterionic eukaryotic (PC:cholesterol) model membranes. It has potent hemolytic activity on human erythrocytes and exhibits low antimicrobial activity against the Gram-negative bacterium E.coli (MIC&gt;50 uM) and the Gram-positive bacterium S.aureus (MIC=25-50 uM). Intracranial injection causes mice to shuffle backward until the encounter an obstacle, at which time the mouse jump into the air. The backward shuffle is reminiscent to the signature dance 'moonwalk' that gained widespread popularity after being performed by Michael Jackson. In Conus mustelinus (Weasel cone), this protein is Conolysin-Mt1.